The primary structure comprises 157 residues: Protein Smg (157 aa).

It belongs to the Smg family.

The chain is Protein Smg from Escherichia coli O139:H28 (strain E24377A / ETEC).